Reading from the N-terminus, the 439-residue chain is Acyl transferase 7 (439 aa).

The interval methionine 1–proline 25 is disordered. Active-site proton acceptor residues include histidine 176 and aspartate 383.

This sequence belongs to the plant acyltransferase family.

Its function is as follows. Involved in the incorporation of ferulate into the cell wall. May act as arabinoxylan feruloyl transferase. The sequence is that of Acyl transferase 7 from Oryza sativa subsp. japonica (Rice).